The sequence spans 310 residues: Pirin-like protein At1g50590 (310 aa).

It belongs to the pirin family.

It is found in the nucleus. In Arabidopsis thaliana (Mouse-ear cress), this protein is Pirin-like protein At1g50590.